Consider the following 510-residue polypeptide: Pheromone-processing carboxypeptidase kex1 (510 aa).

The signal sequence occupies residues 1–21 (MISKLLKIVLLTAGVIGNTLA). The Lumenal portion of the chain corresponds to 22–468 (DSRIHEQYLV…SPDLGNGNYK (447 aa)). Asparagine 51 and asparagine 104 each carry an N-linked (GlcNAc...) asparagine glycan. Active-site residues include serine 175 and aspartate 367. N-linked (GlcNAc...) asparagine glycosylation is found at asparagine 392 and asparagine 416. Histidine 427 is a catalytic residue. Residues 469–489 (WLYLGLIPVALTIIILFSIYL) form a helical membrane-spanning segment. The Cytoplasmic segment spans residues 490–510 (CRRFGLFGLSKQRYQPISPTP).

It belongs to the peptidase S10 family.

The protein localises to the golgi apparatus. Its subcellular location is the trans-Golgi network membrane. The protein resides in the vacuole membrane. The enzyme catalyses Preferential release of a C-terminal arginine or lysine residue.. Functionally, protease with a carboxypeptidase B-like function involved in the C-terminal processing of the lysine and arginine residues from protein precursors. Promotes cell fusion and is involved in the programmed cell death. This Schizosaccharomyces pombe (strain 972 / ATCC 24843) (Fission yeast) protein is Pheromone-processing carboxypeptidase kex1 (kex1).